Here is a 155-residue protein sequence, read N- to C-terminus: Small ribosomal subunit protein uS7cz/uS7cy (155 aa).

Belongs to the universal ribosomal protein uS7 family. In terms of assembly, part of the 30S ribosomal subunit.

It is found in the plastid. The protein resides in the chloroplast. In terms of biological role, one of the primary rRNA binding proteins, it binds directly to 16S rRNA where it nucleates assembly of the head domain of the 30S subunit. This chain is Small ribosomal subunit protein uS7cz/uS7cy (rps7-A), found in Pelargonium hortorum (Common geranium).